The following is a 297-amino-acid chain: ER membrane protein complex subunit 2 (297 aa).

The residue at position 2 (Ala-2) is an N-acetylalanine. 3 TPR repeats span residues 87–120 (HRVKRLTGMRFEAMERYDDAIQLYDRILQEDPTN), 155–188 (QEAWHELAELYINEHDYAKAAFCLEELMMTNPHN), and 192–225 (CQQYAEVKYTQGGLENLELSRKYFAQALKLNNRN). Lys-255 is modified (N6-acetyllysine).

The protein belongs to the EMC2 family. Component of the ER membrane protein complex (EMC). Interacts with WNK1 (via amphipathic alpha-helix region); promoting the ER membrane protein complex assembly by preventing EMC2 ubiquitination. In terms of processing, ubiquitinated when soluble in the cytoplasm, leading to its degradation by the proteasome. Interaction with EMC2 prevents its ubiquitination and degradation.

The protein localises to the endoplasmic reticulum membrane. In terms of biological role, part of the endoplasmic reticulum membrane protein complex (EMC) that enables the energy-independent insertion into endoplasmic reticulum membranes of newly synthesized membrane proteins. Preferentially accommodates proteins with transmembrane domains that are weakly hydrophobic or contain destabilizing features such as charged and aromatic residues. Involved in the cotranslational insertion of multi-pass membrane proteins in which stop-transfer membrane-anchor sequences become ER membrane spanning helices. It is also required for the post-translational insertion of tail-anchored/TA proteins in endoplasmic reticulum membranes. By mediating the proper cotranslational insertion of N-terminal transmembrane domains in an N-exo topology, with translocated N-terminus in the lumen of the ER, controls the topology of multi-pass membrane proteins like the G protein-coupled receptors. By regulating the insertion of various proteins in membranes, it is indirectly involved in many cellular processes. The sequence is that of ER membrane protein complex subunit 2 from Pongo abelii (Sumatran orangutan).